A 124-amino-acid polypeptide reads, in one-letter code: Ubiquitin-related modifier 1 (124 aa).

A disordered region spans residues 34-53 (IPSLVPKDNTTSAKNPPPKD). 1-thioglycine is present on glycine 124. Glycine 124 participates in a covalent cross-link: Glycyl lysine isopeptide (Gly-Lys) (interchain with K-? in acceptor proteins).

The protein belongs to the URM1 family. Post-translationally, C-terminal thiocarboxylation occurs in 2 steps, it is first acyl-adenylated (-COAMP) via the hesA/moeB/thiF part of UBA4, then thiocarboxylated (-COSH) via the rhodanese domain of UBA4.

It is found in the cytoplasm. Its pathway is tRNA modification; 5-methoxycarbonylmethyl-2-thiouridine-tRNA biosynthesis. Its function is as follows. Acts as a sulfur carrier required for 2-thiolation of mcm(5)S(2)U at tRNA wobble positions of cytosolic tRNA(Lys), tRNA(Glu) and tRNA(Gln). Serves as sulfur donor in tRNA 2-thiolation reaction by being thiocarboxylated (-COSH) at its C-terminus by the MOCS3 homolog UBA4. The sulfur is then transferred to tRNA to form 2-thiolation of mcm(5)S(2)U. Prior mcm(5) tRNA modification by the elongator complex is required for 2-thiolation. Also acts as a ubiquitin-like protein (UBL) that is covalently conjugated via an isopeptide bond to lysine residues of target proteins such as AHP1. The thiocarboxylated form serves as substrate for conjugation and oxidative stress specifically induces the formation of UBL-protein conjugates. This chain is Ubiquitin-related modifier 1, found in Coprinopsis cinerea (strain Okayama-7 / 130 / ATCC MYA-4618 / FGSC 9003) (Inky cap fungus).